The chain runs to 132 residues: DNA-directed RNA polymerase subunit omega (132 aa).

The tract at residues 76–105 is disordered; sequence EVDEPEQDAASIAEGQLTSGSQDEDEMPET.

Belongs to the RNA polymerase subunit omega family. The RNAP catalytic core consists of 2 alpha, 1 beta, 1 beta' and 1 omega subunit. When a sigma factor is associated with the core the holoenzyme is formed, which can initiate transcription.

The enzyme catalyses RNA(n) + a ribonucleoside 5'-triphosphate = RNA(n+1) + diphosphate. Its function is as follows. Promotes RNA polymerase assembly. Latches the N- and C-terminal regions of the beta' subunit thereby facilitating its interaction with the beta and alpha subunits. The polypeptide is DNA-directed RNA polymerase subunit omega (Allorhizobium ampelinum (strain ATCC BAA-846 / DSM 112012 / S4) (Agrobacterium vitis (strain S4))).